Consider the following 227-residue polypeptide: NAD(P)H-quinone oxidoreductase subunit K, chloroplastic (227 aa).

[4Fe-4S] cluster contacts are provided by C43, C44, C108, and C139.

It belongs to the complex I 20 kDa subunit family. In terms of assembly, NDH is composed of at least 16 different subunits, 5 of which are encoded in the nucleus. Requires [4Fe-4S] cluster as cofactor.

It localises to the plastid. The protein resides in the chloroplast thylakoid membrane. It carries out the reaction a plastoquinone + NADH + (n+1) H(+)(in) = a plastoquinol + NAD(+) + n H(+)(out). The catalysed reaction is a plastoquinone + NADPH + (n+1) H(+)(in) = a plastoquinol + NADP(+) + n H(+)(out). NDH shuttles electrons from NAD(P)H:plastoquinone, via FMN and iron-sulfur (Fe-S) centers, to quinones in the photosynthetic chain and possibly in a chloroplast respiratory chain. The immediate electron acceptor for the enzyme in this species is believed to be plastoquinone. Couples the redox reaction to proton translocation, and thus conserves the redox energy in a proton gradient. In Drimys granadensis, this protein is NAD(P)H-quinone oxidoreductase subunit K, chloroplastic.